Consider the following 714-residue polypeptide: Fatty acid oxidation complex subunit alpha (714 aa).

The tract at residues 1-190 (MEMASAFTLN…KLGLVDDVVP (190 aa)) is enoyl-CoA hydratase. The 3-hydroxyacyl-CoA dehydrogenase stretch occupies residues 306–714 (APLNSVGILG…FWKTTATDLQ (409 aa)).

The protein in the N-terminal section; belongs to the enoyl-CoA hydratase/isomerase family. In the central section; belongs to the 3-hydroxyacyl-CoA dehydrogenase family. As to quaternary structure, heterotetramer of two alpha chains (FadJ) and two beta chains (FadI).

The protein resides in the cytoplasm. The catalysed reaction is a (3S)-3-hydroxyacyl-CoA = a (2E)-enoyl-CoA + H2O. It catalyses the reaction a 4-saturated-(3S)-3-hydroxyacyl-CoA = a (3E)-enoyl-CoA + H2O. The enzyme catalyses a (3S)-3-hydroxyacyl-CoA + NAD(+) = a 3-oxoacyl-CoA + NADH + H(+). It carries out the reaction (3S)-3-hydroxybutanoyl-CoA = (3R)-3-hydroxybutanoyl-CoA. It participates in lipid metabolism; fatty acid beta-oxidation. In terms of biological role, catalyzes the formation of a hydroxyacyl-CoA by addition of water on enoyl-CoA. Also exhibits 3-hydroxyacyl-CoA epimerase and 3-hydroxyacyl-CoA dehydrogenase activities. This Escherichia coli (strain UTI89 / UPEC) protein is Fatty acid oxidation complex subunit alpha.